Reading from the N-terminus, the 529-residue chain is MQRLEALGIHPKKRVFWNTVSPVLVEHTLLRGEGLLAHHGPLVVDTTPYTGRSPKDKFVVREPEVEGEIWWGEVNQPFAPEAFEALYQRVVQYLSERDLYVQDLYAGADRRYRLAVRVVTESPWHALFARNMFILPRRFGNDDEVEAFVPGFTVVHAPYFQAVPERDGTRSEVFVGISFQRRLVLIVGTKYAGEIKKSIFTVMNYLMPKRGVFPMHASANVGKEGDVAVFFGLSGTGKTTLSTDPERPLIGDDEHGWSEDGVFNFEGGCYAKVIRLSPEHEPLIYKASNQFEAILENVVVNPESRRVQWDDDSKTENTRSSYPIAHLENVVESGVAGHPRAIFFLSADAYGVLPPIARLSPEEAMYYFLSGYTARVAGTERGVTEPRATFSACFGAPFLPMHPGVYARMLGEKIRKHAPRVYLVNTGWTGGPYGVGYRFPLPVTRALLKAALSGALENVPYRRDPVFGFEVPLEAPGVPQELLNPRETWADKEAYDQQARKLARLFQENFQKYASGVAKEVAEAGPRTE.

R52 is a binding site for substrate. R130, N131, and F133 together coordinate Ca(2+). 2 residues coordinate substrate: Y191 and K197. Residues K197, H216, and 232–240 (GLSGTGKTT) contribute to the ATP site. The Mn(2+) site is built by K197 and H216. Residue D253 coordinates Mn(2+). G267 is a Ca(2+) binding site. ATP contacts are provided by residues E281, R319, 438 to 439 (RF), F439, and T444. Position 319 (R319) interacts with substrate.

The protein belongs to the phosphoenolpyruvate carboxykinase (ATP) family. As to quaternary structure, dimer of dimers. Mn(2+) is required as a cofactor.

The protein localises to the cytoplasm. It catalyses the reaction oxaloacetate + ATP = phosphoenolpyruvate + ADP + CO2. The protein operates within carbohydrate biosynthesis; gluconeogenesis. With respect to regulation, allosterically activated by calcium. Its function is as follows. Involved in gluconeogenesis. Catalyzes the conversion of oxaloacetate (OAA) to phosphoenolpyruvate (PEP) through direct phosphoryl transfer between the nucleoside triphosphate and OAA. This Thermus thermophilus (strain ATCC 27634 / DSM 579 / HB8) protein is Phosphoenolpyruvate carboxykinase (ATP).